A 441-amino-acid chain; its full sequence is Trigger factor (441 aa).

In terms of domain architecture, PPIase FKBP-type spans 175-260 (GDKVVIDYNS…LVSIMVPKDV (86 aa)).

Belongs to the FKBP-type PPIase family. Tig subfamily.

The protein localises to the cytoplasm. The enzyme catalyses [protein]-peptidylproline (omega=180) = [protein]-peptidylproline (omega=0). Functionally, involved in protein export. Acts as a chaperone by maintaining the newly synthesized protein in an open conformation. Functions as a peptidyl-prolyl cis-trans isomerase. This chain is Trigger factor, found in Anaplasma marginale (strain St. Maries).